The following is a 207-amino-acid chain: Phosphoserine phosphatase (207 aa).

The Nucleophile role is filled by D8. D8 and D10 together coordinate Mg(2+). Catalysis depends on D10, which acts as the Proton donor. Residues E17, R53, 96–97 (SG), and K141 contribute to the substrate site. Position 164 (D164) interacts with Mg(2+). N167 is a binding site for substrate.

This sequence belongs to the HAD-like hydrolase superfamily. SerB family. The cofactor is Mg(2+).

The enzyme catalyses O-phospho-L-serine + H2O = L-serine + phosphate. It carries out the reaction O-phospho-D-serine + H2O = D-serine + phosphate. The protein operates within amino-acid biosynthesis; L-serine biosynthesis; L-serine from 3-phospho-D-glycerate: step 3/3. This chain is Phosphoserine phosphatase, found in Campylobacter jejuni subsp. doylei (strain ATCC BAA-1458 / RM4099 / 269.97).